The primary structure comprises 236 residues: Ureidoacrylate amidohydrolase RutB (236 aa).

Asp-24 (proton acceptor) is an active-site residue. Residue Lys-133 is part of the active site. Residue Cys-166 is the Nucleophile of the active site.

Belongs to the isochorismatase family. RutB subfamily.

It catalyses the reaction (Z)-3-ureidoacrylate + H2O + H(+) = (Z)-3-aminoacrylate + NH4(+) + CO2. The enzyme catalyses (Z)-3-ureidoacrylate + H2O = (Z)-3-aminoacrylate + carbamate + H(+). The catalysed reaction is (Z)-2-methylureidoacrylate + H2O + H(+) = (Z)-2-methylaminoacrylate + NH4(+) + CO2. In terms of biological role, hydrolyzes ureidoacrylate to form aminoacrylate and carbamate. The carbamate hydrolyzes spontaneously, thereby releasing one of the nitrogen atoms of the pyrimidine ring as ammonia and one of its carbon atoms as CO2. The chain is Ureidoacrylate amidohydrolase RutB from Klebsiella pneumoniae subsp. pneumoniae (strain ATCC 700721 / MGH 78578).